We begin with the raw amino-acid sequence, 443 residues long: Proline--tRNA ligase (443 aa).

This sequence belongs to the class-II aminoacyl-tRNA synthetase family. ProS type 2 subfamily. As to quaternary structure, homodimer.

The protein resides in the cytoplasm. The catalysed reaction is tRNA(Pro) + L-proline + ATP = L-prolyl-tRNA(Pro) + AMP + diphosphate. Its function is as follows. Catalyzes the attachment of proline to tRNA(Pro) in a two-step reaction: proline is first activated by ATP to form Pro-AMP and then transferred to the acceptor end of tRNA(Pro). This chain is Proline--tRNA ligase, found in Caulobacter vibrioides (strain ATCC 19089 / CIP 103742 / CB 15) (Caulobacter crescentus).